A 273-amino-acid polypeptide reads, in one-letter code: Tryptophan synthase alpha chain (273 aa).

Residues Glu-56 and Asp-67 each act as proton acceptor in the active site.

Belongs to the TrpA family. In terms of assembly, tetramer of two alpha and two beta chains.

It carries out the reaction (1S,2R)-1-C-(indol-3-yl)glycerol 3-phosphate + L-serine = D-glyceraldehyde 3-phosphate + L-tryptophan + H2O. It functions in the pathway amino-acid biosynthesis; L-tryptophan biosynthesis; L-tryptophan from chorismate: step 5/5. Its function is as follows. The alpha subunit is responsible for the aldol cleavage of indoleglycerol phosphate to indole and glyceraldehyde 3-phosphate. This Shewanella baltica (strain OS185) protein is Tryptophan synthase alpha chain.